A 122-amino-acid chain; its full sequence is MPAARQQRGAAVEAAARALLEQAGLRLVVGNANYRGGELDLVMHDGPSLVFVEVRYRRDDRFGGGAASVDWRKRRKLVLAAQLFLGAHPALAALPCRFDVVDASGEPPVLHWIRDAFRADDC.

This sequence belongs to the UPF0102 family.

The sequence is that of UPF0102 protein XAC0764 from Xanthomonas axonopodis pv. citri (strain 306).